Consider the following 473-residue polypeptide: MTQPRKLHIKSFGCQMNVYDAQRMVDALAPEGFVETANADEADLVILNTCHIREKASEKVYSELGRLRVAKDEAALQGRRMNIAVAGCVAQAEGAEIIRRQPAVDVVVGPQSYHHLPQLLAEAARGGRALETEFPVDDKFGFLPPPQPDAIRARGISAFVTVQEGCDKFCTFCVVPYTRGAEVSRPVDKIVEDVRRLADNGVREITLIGQNVNAYHGDGPDGRPWPLGALLHHLAKIPGIVRLRYSTSHPRDVDQSLIDAHRDLPALMPFVHLPVQSGSDAILAAMNRKHSADDYRRLVDRFRSANPAIAFSSDFIVGFPGETDEDFAATLALVTQIGYAGAYSFKYSPRPGTPAAELQETVSAAVMDERLVRLQELIDSQQAAFNAAVIGTTVEVLFERAARNPGQIVGRTAYLQPAHVMAAPDIIGQVLPVRIDSLERYSLIGELAAPQQHSGFATRSEDSPQSLPITTGA.

The region spanning 5–125 is the MTTase N-terminal domain; the sequence is RKLHIKSFGC…LPQLLAEAAR (121 aa). The [4Fe-4S] cluster site is built by C14, C50, C88, C166, C170, and C173. One can recognise a Radical SAM core domain in the interval 152 to 384; the sequence is RARGISAFVT…QELIDSQQAA (233 aa). The TRAM domain occupies 387–449; it reads AAVIGTTVEV…RYSLIGELAA (63 aa). Positions 452–473 are disordered; sequence QHSGFATRSEDSPQSLPITTGA.

This sequence belongs to the methylthiotransferase family. MiaB subfamily. Monomer. The cofactor is [4Fe-4S] cluster.

The protein localises to the cytoplasm. It carries out the reaction N(6)-dimethylallyladenosine(37) in tRNA + (sulfur carrier)-SH + AH2 + 2 S-adenosyl-L-methionine = 2-methylsulfanyl-N(6)-dimethylallyladenosine(37) in tRNA + (sulfur carrier)-H + 5'-deoxyadenosine + L-methionine + A + S-adenosyl-L-homocysteine + 2 H(+). Functionally, catalyzes the methylthiolation of N6-(dimethylallyl)adenosine (i(6)A), leading to the formation of 2-methylthio-N6-(dimethylallyl)adenosine (ms(2)i(6)A) at position 37 in tRNAs that read codons beginning with uridine. This chain is tRNA-2-methylthio-N(6)-dimethylallyladenosine synthase, found in Rhodopseudomonas palustris (strain BisB18).